A 258-amino-acid polypeptide reads, in one-letter code: Bidirectional sugar transporter SWEET9 (258 aa).

Over 1-7 the chain is Extracellular; sequence MFLKVHE. The helical transmembrane segment at 8–28 threads the bilayer; the sequence is IAFLFGLLGNIVSFGVFLSPV. Residues 10 to 96 enclose the MtN3/slv 1 domain; the sequence is FLFGLLGNIV…FLYILYAPRE (87 aa). Residues 29 to 42 are Cytoplasmic-facing; sequence PTFYGIYKKKSSKG. Residues 43-63 traverse the membrane as a helical segment; sequence FQSIPYICALASATLLLYYGI. Residues 64–69 are Extracellular-facing; sequence MKTHAY. Residues 70–90 traverse the membrane as a helical segment; that stretch reads LIISINTFGCFIEISYLFLYI. At 91 to 103 the chain is on the cytoplasmic side; it reads LYAPREAKISTLK. A helical transmembrane segment spans residues 104–124; that stretch reads LIVICNIGGLGLLILLVNLLV. Residues 125 to 131 are Extracellular-facing; the sequence is PKQHRVS. Residues 132-152 form a helical membrane-spanning segment; it reads TVGWVCAAYSLAVFASPLSVM. In terms of domain architecture, MtN3/slv 2 spans 132–216; sequence TVGWVCAAYS…ILYMMYQGST (85 aa). Topologically, residues 153–165 are cytoplasmic; the sequence is RKVIKTKSVEYMP. The chain crosses the membrane as a helical span at residues 166-186; the sequence is FLLSLSLTLNAVMWFFYGLLI. At 187–189 the chain is on the extracellular side; sequence KDK. A helical membrane pass occupies residues 190–210; the sequence is FIAMPNILGFLFGVAQMILYM. Residues 211-258 lie on the Cytoplasmic side of the membrane; sequence MYQGSTKTDLPTENQLANKTDVNEVPIVAVELPDVGSDNVEGSVRPMK.

Belongs to the SWEET sugar transporter family. As to quaternary structure, forms heterooligomers with SWEET1, SWEET5, SWEET8, SWEET11, SWEET13, SWEET16 and SWEET17. As to expression, specifically expressed in nectaries, mostly in the lower half of nectary parenchyma.

It is found in the cell membrane. The protein localises to the cytoplasmic vesicle membrane. The protein resides in the golgi apparatus. Its subcellular location is the trans-Golgi network membrane. In terms of biological role, mediates both low-affinity uptake and efflux of sugar across the plasma membrane. Nectary-specific sugar transporter required for nectar production by mediating the secretion of sucrose from the nectary parenchyma to the extracellular space. The chain is Bidirectional sugar transporter SWEET9 from Arabidopsis thaliana (Mouse-ear cress).